A 322-amino-acid chain; its full sequence is Zinc finger C2HC domain-containing protein CBG14627 (322 aa).

2 consecutive C2HC/C3H-type zinc fingers follow at residues 9-38 (PVYP…LATL) and 119-148 (DYVQ…QTTR). Zn(2+) is bound by residues C13, C16, H28, C32, C123, C126, H138, and C142. The tract at residues 144–322 (EQTTRKQGGK…SRNNSRSRIF (179 aa)) is disordered. The segment covering 148–168 (RKQGGKSSAGNRGLTSNNYRS) has biased composition (polar residues). Basic and acidic residues predominate over residues 171–219 (SKHEGRKQESSSRNGSAERKTTTRGRDGSLSRARRDDSNDLTNRRKSLE). A compositionally biased stretch (polar residues) spans 220-238 (TRSQLTTGQANNRTTSLSA). The span at 278–294 (TTTTASASRSGSGSSSR) shows a compositional bias: low complexity. A compositionally biased stretch (basic and acidic residues) spans 296–305 (RTRDESRESR). Residues 311 to 322 (SNSRNNSRSRIF) are compositionally biased toward low complexity.

The protein belongs to the ZC2HC1 family. It depends on Zn(2+) as a cofactor.

The polypeptide is Zinc finger C2HC domain-containing protein CBG14627 (Caenorhabditis briggsae).